The following is a 78-amino-acid chain: Large ribosomal subunit protein bL28 (78 aa).

A disordered region spans residues 1–21 (MSRVCQLSGKRANNGMAVSHS).

The protein belongs to the bacterial ribosomal protein bL28 family.

The polypeptide is Large ribosomal subunit protein bL28 (Synechococcus sp. (strain RCC307)).